Reading from the N-terminus, the 502-residue chain is MGTENKEVIPKEEISEESEPHGSLLEKFPKVVYQGHEFGAGCEEDMLEGHSRESMEEVIEQMSPQERDFPSGLMIFKKSPSSEKDRENNESERGCSPSPNLVTHQGDTTEGVSAFATSGQNFLEILESNKTQRSSVGEKPHTCKECGKAFNQNSHLIQHMRVHSGEKPFECKECGKTFGTNSSLRRHLRIHAGEKPFACNECGKAFIQSSHLIHHHRIHTGERPYKCEECGKAFSQNSALILHQRIHTGEKPYECNECGKTFRVSSQLIQHQRIHTEERYHECNECGKAFKHSSGLIRHQKIHTGEKPYLCNECGKGFGQSSELIRHQRIHTGDKPYECNECGKTFGQNSEIIRHIRIHTGEKPYVCKECGKAFRGNSELLRHERIHTGEKPYECFECGKAFRRTSHLIVHQRIHTGEKPHQCNECARTFWDNSELLLHQKIHIGEKPYECSECEKTFSQHSQLIIHQRIHTGEKPYECQECQKTFSRSSHLLRHQSVHCME.

Composition is skewed to basic and acidic residues over residues 1-13 and 80-93; these read MGTE…PKEE and PSSE…ESER. Disordered stretches follow at residues 1 to 26 and 47 to 103; these read MGTE…SLLE and LEGH…NLVT. Glycyl lysine isopeptide (Lys-Gly) (interchain with G-Cter in SUMO2) cross-links involve residues Lys-6 and Lys-11. 13 consecutive C2H2-type zinc fingers follow at residues 141–163, 169–191, 197–219, 225–247, 253–275, 281–303, 309–331, 337–359, 365–387, 393–415, 421–443, 449–471, and 477–499; these read HTCK…MRVH, FECK…LRIH, FACN…HRIH, YKCE…QRIH, YECN…QRIH, HECN…QKIH, YLCN…QRIH, YECN…IRIH, YVCK…ERIH, YECF…QRIH, HQCN…QKIH, YECS…QRIH, and YECQ…QSVH.

The protein belongs to the krueppel C2H2-type zinc-finger protein family.

It is found in the nucleus. May be involved in transcriptional regulation. This Homo sapiens (Human) protein is Zinc finger protein 3 homolog (ZFP3).